The primary structure comprises 227 residues: A-type potassium channel modulatory protein KCNIP1 (227 aa).

Positions 38–94 (LEMTMVCHRPEGLEQLEAQTNFTKRELQVLYRGFKNECPSGVVNEETFKQIYAQFFP) constitute an EF-hand 1; degenerate domain. 3 consecutive EF-hand domains span residues 97–132 (DASTYAHYLFNAFDTTQTGSVKFEDFVTALSILLRG), 133–168 (TVHEKLRWTFNLYDINKDGYINKEEMMDIVKAIYDM), and 181–216 (TPRQHVDVFFQKMDKNKDGIVTLDEFLESCQEDDNI). Positions 146, 148, 150, 152, 157, 194, 196, 198, and 205 each coordinate Ca(2+). The segment at 214 to 227 (DNIMRSLQLFQNVM) is interaction with KCND2.

The protein belongs to the recoverin family. As to quaternary structure, component of heteromultimeric potassium channels. Identified in potassium channel complexes containing KCND1, KCND2, KCND3, KCNIP1, KCNIP2, KCNIP3, KCNIP4, DPP6 and DPP10. Part of a heterooctamer composed of the tetrameric channel and four KCNIP1 chains. Probably part of a complex consisting of KCNIP1, KCNIP2 isoform 3 and KCND2. Self-associates to form homodimers and homotetramers. Interacts with KCNIP2 isoform 3 in a calcium-dependent manner. Interacts with KCND2; this interaction mediates the capture of both the N- and C-terminus of KCND2, thus preventing KCND2 N-type inactivation and modulates the channel gating kinetics. Interacts with KCND3; each KCNIP1 monomer interacts with two adjacent KCND3 subunits, through both the N-terminal inactivation ball of a KCND3 subunit and a C-terminal helix from the adjacent KCND3 subunit, clamping them together; this interaction stabilizes the tetrameric form and modulates the channel gating kinetics namely channel activation and inactivation kinetics and rate of recovery from inactivation. As to expression, expressed in brain. Found in a subpopulation of neurons widely distributed and enriched in Purkinje cells of the cerebellum and in the reticular thalamic and medial habenular nuclei.

Its subcellular location is the cell membrane. It localises to the cytoplasm. The protein resides in the cell projection. It is found in the dendrite. Functionally, regulatory subunit of Kv4/D (Shal)-type voltage-gated rapidly inactivating A-type potassium channels. Regulates channel density, inactivation kinetics and rate of recovery from inactivation in a calcium-dependent and isoform-specific manner. Modulates KCND2/Kv4.2 currents. In vitro, modulates KCND1/Kv4.1 currents. Increases the presence of KCND2 at the cell surface. In Mus musculus (Mouse), this protein is A-type potassium channel modulatory protein KCNIP1.